A 194-amino-acid chain; its full sequence is Fe/S biogenesis protein NfuA (194 aa).

Positions 151 and 154 each coordinate [4Fe-4S] cluster.

The protein belongs to the NfuA family. Homodimer. Requires [4Fe-4S] cluster as cofactor.

Functionally, involved in iron-sulfur cluster biogenesis. Binds a 4Fe-4S cluster, can transfer this cluster to apoproteins, and thereby intervenes in the maturation of Fe/S proteins. Could also act as a scaffold/chaperone for damaged Fe/S proteins. This is Fe/S biogenesis protein NfuA from Mannheimia succiniciproducens (strain KCTC 0769BP / MBEL55E).